Consider the following 151-residue polypeptide: Zinc finger HIT domain-containing protein 3 (151 aa).

Positions 11, 14, 22, 25, 30, 34, 38, and 42 each coordinate Zn(2+). The segment at 11–42 (CVVCLEKPKYRCPTCRVPYCSVPCFQKHKEQC) adopts an HIT-type zinc-finger fold. The segment covering 43 to 53 (SSEARPVEKRR) has biased composition (basic and acidic residues). Positions 43 to 81 (SSEARPVEKRRAGPPVRSEESKDDDSSVADFLNSDEEED) are disordered. Residues 63–81 (SKDDDSSVADFLNSDEEED) are compositionally biased toward acidic residues. A Phosphoserine modification is found at serine 76.

As to quaternary structure, thyroid receptor interacting proteins (TRIPs) specifically interact with the ligand binding domain of the thyroid receptor (TR). Requires the presence of thyroid hormone for its interaction. Interacts with NUFIP1. Interacts (via HIT-type zinc finger) with the RUVBL1/RUVBL2 complex in the presence of ADP. As to expression, expressed in the cerebellum.

The protein resides in the cytoplasm. It is found in the nucleus. This Mus musculus (Mouse) protein is Zinc finger HIT domain-containing protein 3 (Znhit3).